The following is a 350-amino-acid chain: Biotin synthase (350 aa).

The Radical SAM core domain occupies 54 to 278 (REIQLSTLLS…TMPQSYVRLS (225 aa)). [4Fe-4S] cluster is bound by residues Cys69, Cys73, and Cys76. [2Fe-2S] cluster contacts are provided by Cys113, Cys144, Cys204, and Arg276.

It belongs to the radical SAM superfamily. Biotin synthase family. As to quaternary structure, homodimer. Requires [4Fe-4S] cluster as cofactor. [2Fe-2S] cluster is required as a cofactor.

The catalysed reaction is (4R,5S)-dethiobiotin + (sulfur carrier)-SH + 2 reduced [2Fe-2S]-[ferredoxin] + 2 S-adenosyl-L-methionine = (sulfur carrier)-H + biotin + 2 5'-deoxyadenosine + 2 L-methionine + 2 oxidized [2Fe-2S]-[ferredoxin]. The protein operates within cofactor biosynthesis; biotin biosynthesis; biotin from 7,8-diaminononanoate: step 2/2. In terms of biological role, catalyzes the conversion of dethiobiotin (DTB) to biotin by the insertion of a sulfur atom into dethiobiotin via a radical-based mechanism. In Neisseria meningitidis serogroup C (strain 053442), this protein is Biotin synthase.